We begin with the raw amino-acid sequence, 347 residues long: Quinolinate synthase (347 aa).

Iminosuccinate contacts are provided by His47 and Ser68. Cys113 serves as a coordination point for [4Fe-4S] cluster. Residues 139–141 (YAN) and Ser156 contribute to the iminosuccinate site. Cys200 is a [4Fe-4S] cluster binding site. Residues 226–228 (HPE) and Thr243 each bind iminosuccinate. [4Fe-4S] cluster is bound at residue Cys297.

Belongs to the quinolinate synthase family. Type 1 subfamily. [4Fe-4S] cluster serves as cofactor.

It is found in the cytoplasm. The enzyme catalyses iminosuccinate + dihydroxyacetone phosphate = quinolinate + phosphate + 2 H2O + H(+). Its pathway is cofactor biosynthesis; NAD(+) biosynthesis; quinolinate from iminoaspartate: step 1/1. In terms of biological role, catalyzes the condensation of iminoaspartate with dihydroxyacetone phosphate to form quinolinate. The polypeptide is Quinolinate synthase (Shigella flexneri).